We begin with the raw amino-acid sequence, 869 residues long: MLAKAKYRKDYKQPDFTVTDIYLDFQLDPKHTVVTAITKFQRLNNEATSLCLDGHSFQFSSIKFNGEPFSDYQQDGESLTLDLKDKSADEFEIEIVTFLVPAENTSLQGLYQSGEGICTQCEAEGFRQITYMLDRPDVLARYITKITADKTKYPFLLSNGNRIASGELEDGRHWVEWNDPFPKPSYLFALVAGDFDLLQDKFITKSGREVALELYVDRGNLNRATWAMESLKKAMKWDEDRFNLEYDLDIYMIVAVDFFNMGAMENKGLNIFNSKFVLANPQTATDDDYLAIESVIAHEYFHNWTGNRVTCRDWFQLSLKEGLTVFRDQEFSSDTGSRAVNRINNVKFLRTVQFAEDASPMSHPIRPEKVIEMNNFYTVTVYEKGAEVIRMLHTLLGEQGFQKGMQLYIAENDGKAATCEDFVSAMERANNLDLNQFRRWYSQSGTPELLISDAYDEKTHTYRLTVSQSTPPTADQMEKVNLHIPLKVALYDANGTKQMLQHNGELLSDVLNVTEKDQVFEFHGIYGRPIPALLCDFSAPVKLDYDYKTEQLLGLLKFADNQFIRWDAAQMLFAQELRRNVVRFQQGEALEISPEILTALSYVLNHYEKDIELATLILTLPKEMEFAESFKTIDPDGISAARAFMQAQIAESLKDDFLRVYTHIRLNDYQVTQQDIALRVMRNLCLTYLAYTNLGNNLVQKHYNNANNMTDTLAALSVATKAALLCRDVLLADFEQKWQHDGLVMDKWFALQATRPDDNVLEIIQLLMDHPSFNFNNPNRLRSLVGSFANHNLKAFHNVSGSGYRFLTDVLIRLNESNPQVAARLIEPLIRFSRFDAQRQTLMKRALERLSVVENLSKDLFEKIEKALQ.

Substrate contacts are provided by residues Glu122 and Gly262 to Asn266. His298 contacts Zn(2+). Glu299 acts as the Proton acceptor in catalysis. 2 residues coordinate Zn(2+): His302 and Glu321.

Belongs to the peptidase M1 family. It depends on Zn(2+) as a cofactor.

It is found in the cell inner membrane. The enzyme catalyses Release of an N-terminal amino acid, Xaa-|-Yaa- from a peptide, amide or arylamide. Xaa is preferably Ala, but may be most amino acids including Pro (slow action). When a terminal hydrophobic residue is followed by a prolyl residue, the two may be released as an intact Xaa-Pro dipeptide.. Its function is as follows. Aminopeptidase N is involved in the degradation of intracellular peptides generated by protein breakdown during normal growth as well as in response to nutrient starvation. This chain is Aminopeptidase N (pepN), found in Haemophilus influenzae (strain ATCC 51907 / DSM 11121 / KW20 / Rd).